Here is a 422-residue protein sequence, read N- to C-terminus: Regulator of sigma-W protease RasP (422 aa).

The next 4 helical transmembrane spans lie at 6–26, 175–195, 346–366, and 394–414; these read VIAFIIIFGTLVFFHELGHLL, IAAGPIMNFILAYVILVMLGL, IVNLFQFAAFLSINLGIVNLL, and EAFVVFIGVAFLMLLMLVVTW. Histidine 20 contributes to the Zn(2+) binding site. Glutamate 21 is a catalytic residue. Residue histidine 24 participates in Zn(2+) binding. The 86-residue stretch at 186-271 folds into the PDZ domain; that stretch reads AYVILVMLGL…TLHISVTPEA (86 aa).

It belongs to the peptidase M50B family. It depends on Zn(2+) as a cofactor.

The protein resides in the cell membrane. Its function is as follows. Is responsible for site-2 cleavage of the RsiW anti-sigma factor. This results, after a third proteolytic step catalyzed by the ClpXP protease, in the release of SigW and the transcription activation of the genes under the control of the sigma-W factor. Can also cleave liberated signal peptides of PenP and Mpr, probably within in the cell membrane. The chain is Regulator of sigma-W protease RasP from Bacillus subtilis (strain 168).